A 105-amino-acid polypeptide reads, in one-letter code: UPF0145 protein jk0060 (105 aa).

This sequence belongs to the UPF0145 family.

The polypeptide is UPF0145 protein jk0060 (Corynebacterium jeikeium (strain K411)).